The primary structure comprises 132 residues: Large ribosomal subunit protein uL24 (132 aa).

The protein belongs to the universal ribosomal protein uL24 family. Part of the 50S ribosomal subunit.

Functionally, one of two assembly initiator proteins, it binds directly to the 5'-end of the 23S rRNA, where it nucleates assembly of the 50S subunit. Located at the polypeptide exit tunnel on the outside of the subunit. This is Large ribosomal subunit protein uL24 from Aeropyrum pernix (strain ATCC 700893 / DSM 11879 / JCM 9820 / NBRC 100138 / K1).